The following is a 295-amino-acid chain: Light-independent protochlorophyllide reductase iron-sulfur ATP-binding protein (295 aa).

Residues 39 to 44 (GIGKST) and K68 contribute to the ATP site. S43 contacts Mg(2+). Residues C124 and C158 each contribute to the [4Fe-4S] cluster site. Position 209–210 (209–210 (NR)) interacts with ATP.

Belongs to the NifH/BchL/ChlL family. As to quaternary structure, homodimer. Protochlorophyllide reductase is composed of three subunits; ChlL, ChlN and ChlB. [4Fe-4S] cluster is required as a cofactor.

It catalyses the reaction chlorophyllide a + oxidized 2[4Fe-4S]-[ferredoxin] + 2 ADP + 2 phosphate = protochlorophyllide a + reduced 2[4Fe-4S]-[ferredoxin] + 2 ATP + 2 H2O. The protein operates within porphyrin-containing compound metabolism; chlorophyll biosynthesis (light-independent). In terms of biological role, component of the dark-operative protochlorophyllide reductase (DPOR) that uses Mg-ATP and reduced ferredoxin to reduce ring D of protochlorophyllide (Pchlide) to form chlorophyllide a (Chlide). This reaction is light-independent. The L component serves as a unique electron donor to the NB-component of the complex, and binds Mg-ATP. This is Light-independent protochlorophyllide reductase iron-sulfur ATP-binding protein from Prochlorococcus marinus (strain MIT 9312).